Here is a 147-residue protein sequence, read N- to C-terminus: Urease accessory protein UreE (147 aa).

The protein belongs to the UreE family.

It is found in the cytoplasm. Functionally, involved in urease metallocenter assembly. Binds nickel. Probably functions as a nickel donor during metallocenter assembly. The protein is Urease accessory protein UreE of Nostoc sp. (strain PCC 7120 / SAG 25.82 / UTEX 2576).